We begin with the raw amino-acid sequence, 430 residues long: Signal recognition particle receptor FtsY (430 aa).

A disordered region spans residues Asp-75–His-95. GTP contacts are provided by residues Gly-238 to Thr-245, Asp-320 to Arg-324, and Thr-382 to Asp-385.

Belongs to the GTP-binding SRP family. FtsY subfamily. As to quaternary structure, part of the signal recognition particle protein translocation system, which is composed of SRP and FtsY.

It is found in the cell membrane. It localises to the cytoplasm. It carries out the reaction GTP + H2O = GDP + phosphate + H(+). Its function is as follows. Involved in targeting and insertion of nascent membrane proteins into the cytoplasmic membrane. Acts as a receptor for the complex formed by the signal recognition particle (SRP) and the ribosome-nascent chain (RNC). This chain is Signal recognition particle receptor FtsY, found in Mycobacterium leprae (strain TN).